The following is a 53-amino-acid chain: Large ribosomal subunit protein bL32c (53 aa).

Residues 1 to 21 (MAVPKKRTSKSKKKSRRSHWI) are disordered.

It belongs to the bacterial ribosomal protein bL32 family.

Its subcellular location is the plastid. It localises to the chloroplast. The protein is Large ribosomal subunit protein bL32c (rpl32) of Cyanidium caldarium (Red alga).